The following is a 272-amino-acid chain: MLVFDKVNRVYPDGTQAVKNVSVHLEKGEFCVLLGPSGAGKSTLMNMVNGLVEPSSGEIILDGGVLNKKNLQLIQRSVSMIHQQLYLIPRLSVLHNVLTGILPTANFWTSLVKSFPVKDQQRAFELLSEVGLEEKHLMRRASALSGGQQQRVAIARAFMANPKVVLADEPVASLDPAMSRSVLNSLKHAAQTNGATVLCTLHQIDYALEFADRIVALREGEVFFDGHPSDMDEDIQKRLYEIEHETKEKMQKNHQKALEDSLSFELKIKAVA.

In terms of domain architecture, ABC transporter spans 2–244 (LVFDKVNRVY…IQKRLYEIEH (243 aa)). Residue 35-42 (GPSGAGKS) participates in ATP binding.

It belongs to the ABC transporter superfamily. Phosphonates importer (TC 3.A.1.9.1) family. The complex is composed of two ATP-binding proteins (PhnC), two transmembrane proteins (PhnE) and a solute-binding protein (PhnD).

It is found in the cell inner membrane. It carries out the reaction phosphonate(out) + ATP + H2O = phosphonate(in) + ADP + phosphate + H(+). Part of the ABC transporter complex PhnCDE involved in phosphonates import. Responsible for energy coupling to the transport system. This is Phosphonates import ATP-binding protein PhnC from Hydrogenovibrio crunogenus (strain DSM 25203 / XCL-2) (Thiomicrospira crunogena).